The sequence spans 484 residues: Putative beta-barrel assembly-enhancing protease (484 aa).

A signal peptide spans 1 to 23 (MKFFPTRTLLCLCIAAPCLPAIA). Residue histidine 133 participates in Zn(2+) binding. Glutamate 134 is a catalytic residue. Residues histidine 137 and glutamate 198 each coordinate Zn(2+). The active-site Proton donor is the aspartate 202. TPR repeat units follow at residues 307-340 (PSIQYGKALVYLDLKQFDKAEPLLTQLVKEQPDN), 341-374 (HFYLDAISDLYIELKQADKAQSLLEKALKQTPNN), 376-408 (VLTINYANVLLKQDKFTDAIRILQRYTHDNPND), and 426-459 (AEDLAARGEIMALQANWNKAIQFYTQASQLVELG).

This sequence belongs to the peptidase M48 family. BepA subfamily. It depends on Zn(2+) as a cofactor.

The protein resides in the periplasm. Functions both as a chaperone and a metalloprotease. Maintains the integrity of the outer membrane by promoting either the assembly or the elimination of outer membrane proteins, depending on their folding state. This is Putative beta-barrel assembly-enhancing protease from Vibrio cholerae serotype O1 (strain ATCC 39315 / El Tor Inaba N16961).